A 442-amino-acid chain; its full sequence is uncharacterized protein (442 aa).

Positions 211–269 (LDYSTDKPEDSESEDIELEDSESEDSESEDIDQHGGQGPDDDEFNANFDDPQFDEFDFG) are disordered. Positions 221–240 (SESEDIELEDSESEDSESED) are enriched in acidic residues.

It is found in the virion. This is an uncharacterized protein from Acanthamoeba polyphaga (Amoeba).